A 189-amino-acid polypeptide reads, in one-letter code: uncharacterized protein (189 aa).

The protein belongs to the inositol monophosphatase superfamily.

This is an uncharacterized protein from Leptospira biflexa.